Here is a 476-residue protein sequence, read N- to C-terminus: Sulfate adenylyltransferase subunit 1 (476 aa).

The tr-type G domain maps to 24 to 240 (KSLLRFLTCG…LENVDIDRDK (217 aa)). The interval 33 to 40 (GSVDDGKS) is G1. 33 to 40 (GSVDDGKS) serves as a coordination point for GTP. The G2 stretch occupies residues 91 to 95 (GITID). The tract at residues 112 to 115 (DTPG) is G3. GTP is bound by residues 112 to 116 (DTPGH) and 167 to 170 (NKMD). Positions 167 to 170 (NKMD) are G4. The segment at 205 to 207 (SAL) is G5.

It belongs to the TRAFAC class translation factor GTPase superfamily. Classic translation factor GTPase family. CysN/NodQ subfamily. In terms of assembly, heterodimer composed of CysD, the smaller subunit, and CysN.

The enzyme catalyses sulfate + ATP + H(+) = adenosine 5'-phosphosulfate + diphosphate. It functions in the pathway sulfur metabolism; hydrogen sulfide biosynthesis; sulfite from sulfate: step 1/3. In terms of biological role, with CysD forms the ATP sulfurylase (ATPS) that catalyzes the adenylation of sulfate producing adenosine 5'-phosphosulfate (APS) and diphosphate, the first enzymatic step in sulfur assimilation pathway. APS synthesis involves the formation of a high-energy phosphoric-sulfuric acid anhydride bond driven by GTP hydrolysis by CysN coupled to ATP hydrolysis by CysD. The protein is Sulfate adenylyltransferase subunit 1 of Vibrio cholerae serotype O1 (strain ATCC 39541 / Classical Ogawa 395 / O395).